A 387-amino-acid polypeptide reads, in one-letter code: Large ribosomal subunit protein uL3 (387 aa).

This sequence belongs to the universal ribosomal protein uL3 family.

It localises to the cytoplasm. This Candida glabrata (strain ATCC 2001 / BCRC 20586 / JCM 3761 / NBRC 0622 / NRRL Y-65 / CBS 138) (Yeast) protein is Large ribosomal subunit protein uL3 (RPL3).